Consider the following 368-residue polypeptide: Phospho-N-acetylmuramoyl-pentapeptide-transferase (368 aa).

Transmembrane regions (helical) follow at residues 2-22, 51-71, 80-100, 117-137, 167-187, 193-213, 234-254, 271-291, and 340-360; these read IALI…TPLL, TLGG…SALY, PSWS…LGFI, GGKF…ALLI, VAII…TNAV, LDGL…IIAF, PLDL…FLWY, LGGL…AVVL, and FWMI…GDWV.

It belongs to the glycosyltransferase 4 family. MraY subfamily. It depends on Mg(2+) as a cofactor.

The protein localises to the cell membrane. The catalysed reaction is UDP-N-acetyl-alpha-D-muramoyl-L-alanyl-gamma-D-glutamyl-meso-2,6-diaminopimeloyl-D-alanyl-D-alanine + di-trans,octa-cis-undecaprenyl phosphate = di-trans,octa-cis-undecaprenyl diphospho-N-acetyl-alpha-D-muramoyl-L-alanyl-D-glutamyl-meso-2,6-diaminopimeloyl-D-alanyl-D-alanine + UMP. The protein operates within cell wall biogenesis; peptidoglycan biosynthesis. Functionally, catalyzes the initial step of the lipid cycle reactions in the biosynthesis of the cell wall peptidoglycan: transfers peptidoglycan precursor phospho-MurNAc-pentapeptide from UDP-MurNAc-pentapeptide onto the lipid carrier undecaprenyl phosphate, yielding undecaprenyl-pyrophosphoryl-MurNAc-pentapeptide, known as lipid I. The chain is Phospho-N-acetylmuramoyl-pentapeptide-transferase from Bifidobacterium longum (strain DJO10A).